Reading from the N-terminus, the 791-residue chain is Major facilitator superfamily domain-containing protein 6 (791 aa).

Residue alanine 2 is modified to N-acetylalanine. Phosphothreonine is present on threonine 10. The tract at residues 22–47 is disordered; the sequence is LADPFNGISREPEPPSNETPSSTETS. Residues 37 to 47 are compositionally biased toward low complexity; sequence SNETPSSTETS. A run of 6 helical transmembrane segments spans residues 73 to 93, 105 to 125, 132 to 152, 286 to 306, 335 to 355, and 369 to 389; these read VFYF…PVYY, LLVG…GVVA, KIVL…IGFV, AIFL…ASSV, WGLA…EVLI, and QIVF…ATQF. The segment at 407–427 is disordered; sequence EIPQVERNNSTESSEETPTTT. Low complexity predominate over residues 416–427; the sequence is STESSEETPTTT. Helical transmembrane passes span 450–470, 479–499, 507–527, 544–564, 579–599, and 605–625; these read VLFV…FLYW, TTLF…AYFF, IGHI…YIYI, GVTH…AVPP, LGLG…YFGA, and GIGM…WLAV. 2 disordered regions span residues 662 to 687 and 723 to 791; these read MPRI…NKPA and LQGT…AGGH. Polar residues predominate over residues 750–768; it reads SRNQPSPDAAASQTQTSPA. Residues 782-791 show a composition bias toward low complexity; the sequence is QQAQLAAGGH.

Belongs to the major facilitator superfamily. MFSD6 family. In terms of assembly, may interact with HLA-B62. In terms of tissue distribution, widely expressed. Expression levels in peripheral blood mononuclear cells are highly variable between individuals, including no expression at all.

It localises to the membrane. The sequence is that of Major facilitator superfamily domain-containing protein 6 (MFSD6) from Homo sapiens (Human).